Here is a 141-residue protein sequence, read N- to C-terminus: 3-hydroxyacyl-[acyl-carrier-protein] dehydratase FabZ (141 aa).

Histidine 47 is an active-site residue.

The protein belongs to the thioester dehydratase family. FabZ subfamily.

The protein resides in the cytoplasm. It catalyses the reaction a (3R)-hydroxyacyl-[ACP] = a (2E)-enoyl-[ACP] + H2O. In terms of biological role, involved in unsaturated fatty acids biosynthesis. Catalyzes the dehydration of short chain beta-hydroxyacyl-ACPs and long chain saturated and unsaturated beta-hydroxyacyl-ACPs. In Caldanaerobacter subterraneus subsp. tengcongensis (strain DSM 15242 / JCM 11007 / NBRC 100824 / MB4) (Thermoanaerobacter tengcongensis), this protein is 3-hydroxyacyl-[acyl-carrier-protein] dehydratase FabZ.